Here is a 498-residue protein sequence, read N- to C-terminus: MKINPTNSSSLTSTLEKKNLGNITQIIGPVLDVAFPPGKMPNIYNALVVKGRDTAGQQINVTCEVQQLLGNNRVRAVAMSATDGLTRGMEVMDTGAPLSVPVGGTTLGRIFNVLGEPVDNLGPVDTRTTSPIHRSAPAFIQLDTKLSIFETGIKVVDLLAPYRRGGKIGLFGGAGVGKTVLIMELINNIAKAHGGVSVFGGVGERTREGNDLYMEMKESGVINEENIAESKVALVYGQMNEPPGARMRVGLTALTMAEYFRDVNEQDVLLFIDNIFRFVQAGSEVSALLGRMPSAVGYQPTLSTEMGTLQERITSTKEGSITSIQAVYVPADDLTDPAPATTFAHLDATTVLSRGLAAKGIYPAVDPLDSTSTMLQPRIVGEDHYETAQKVKQTLQRYKELQDIIAILGLDELSEEDRLTVARARKIERFLSQPFFVAEVFTGSPGKYVGLSETIRGFRLILSGELDSLPEQAFYLVGNIDEATAKAMNLEMESNSNK.

172–179 (GGAGVGKT) provides a ligand contact to ATP.

This sequence belongs to the ATPase alpha/beta chains family. As to quaternary structure, F-type ATPases have 2 components, CF(1) - the catalytic core - and CF(0) - the membrane proton channel. CF(1) has five subunits: alpha(3), beta(3), gamma(1), delta(1), epsilon(1). CF(0) has four main subunits: a(1), b(1), b'(1) and c(9-12).

It is found in the plastid. Its subcellular location is the chloroplast thylakoid membrane. It catalyses the reaction ATP + H2O + 4 H(+)(in) = ADP + phosphate + 5 H(+)(out). Functionally, produces ATP from ADP in the presence of a proton gradient across the membrane. The catalytic sites are hosted primarily by the beta subunits. The sequence is that of ATP synthase subunit beta, chloroplastic from Daucus carota (Wild carrot).